Here is a 1184-residue protein sequence, read N- to C-terminus: DNA polymerase III subunit alpha (1184 aa).

This sequence belongs to the DNA polymerase type-C family. DnaE subfamily. The Pol III holoenzyme complex contains at least 10 different subunits organized into 3 functionally essential subassemblies: the Pol III core, the beta sliding clamp processivity factor and the clamp-loading complex. The Pol III core (subunits alpha, epsilon and theta) contains the polymerase and the 3'-5' exonuclease proofreading activities. The polymerase is tethered to the template via the dimeric beta sliding clamp processivity factor. The clamp loader (also called gamma complex) assembles the beta sliding clamp onto the primed template and plays a central role in the organization and communication at the replication fork. The clamp-loading complex contains delta, delta', psi and chi, and 3 copies of either or both of two different DnaX proteins, gamma and tau. The DNA replisome complex has a single clamp loader (3 tau and 1 each of delta, delta', psi and chi subunits) which binds 3 Pol III cores (1 core on the leading strand and 2 on the lagging strand) each with a beta sliding clamp dimer. Interacts with the beta-sliding clamp (DnaN). Co-immunoprecipitates with DarG in the presence and absence of darT.

Its subcellular location is the cytoplasm. The catalysed reaction is DNA(n) + a 2'-deoxyribonucleoside 5'-triphosphate = DNA(n+1) + diphosphate. DNA polymerase III is a complex, multichain enzyme responsible for most of the replicative synthesis in bacteria. Pol III also exhibits 3' to 5' exonuclease activity. The alpha chain is the DNA polymerase. In Mycobacterium tuberculosis (strain ATCC 25618 / H37Rv), this protein is DNA polymerase III subunit alpha (dnaE1).